The chain runs to 411 residues: LL-diaminopimelate aminotransferase (411 aa).

Substrate is bound by residues tyrosine 15 and glycine 42. Pyridoxal 5'-phosphate contacts are provided by residues tyrosine 72, 108–109 (SK), tyrosine 132, asparagine 187, tyrosine 218, and 246–248 (SFS). Positions 109, 132, and 187 each coordinate substrate. Lysine 249 is modified (N6-(pyridoxal phosphate)lysine). Arginine 257 and asparagine 292 together coordinate pyridoxal 5'-phosphate. Residues asparagine 292 and arginine 388 each coordinate substrate.

Belongs to the class-I pyridoxal-phosphate-dependent aminotransferase family. LL-diaminopimelate aminotransferase subfamily. As to quaternary structure, homodimer. Pyridoxal 5'-phosphate is required as a cofactor.

The catalysed reaction is (2S,6S)-2,6-diaminopimelate + 2-oxoglutarate = (S)-2,3,4,5-tetrahydrodipicolinate + L-glutamate + H2O + H(+). The protein operates within amino-acid biosynthesis; L-lysine biosynthesis via DAP pathway; LL-2,6-diaminopimelate from (S)-tetrahydrodipicolinate (aminotransferase route): step 1/1. Its function is as follows. Involved in the synthesis of meso-diaminopimelate (m-DAP or DL-DAP), required for both lysine and peptidoglycan biosynthesis. Catalyzes the direct conversion of tetrahydrodipicolinate to LL-diaminopimelate. This Gloeothece citriformis (strain PCC 7424) (Cyanothece sp. (strain PCC 7424)) protein is LL-diaminopimelate aminotransferase.